Reading from the N-terminus, the 1086-residue chain is Isoleucine--tRNA ligase (1086 aa).

The short motif at 53–63 (PFANGLPHYGH) is the 'HIGH' region element. The 'KMSKS' region signature appears at 624 to 628 (KLSKR). Lys627 lines the ATP pocket.

The protein belongs to the class-I aminoacyl-tRNA synthetase family. IleS type 2 subfamily. As to quaternary structure, monomer. Requires Zn(2+) as cofactor.

The protein resides in the cytoplasm. It catalyses the reaction tRNA(Ile) + L-isoleucine + ATP = L-isoleucyl-tRNA(Ile) + AMP + diphosphate. Its function is as follows. Catalyzes the attachment of isoleucine to tRNA(Ile). As IleRS can inadvertently accommodate and process structurally similar amino acids such as valine, to avoid such errors it has two additional distinct tRNA(Ile)-dependent editing activities. One activity is designated as 'pretransfer' editing and involves the hydrolysis of activated Val-AMP. The other activity is designated 'posttransfer' editing and involves deacylation of mischarged Val-tRNA(Ile). The chain is Isoleucine--tRNA ligase from Rickettsia typhi (strain ATCC VR-144 / Wilmington).